The primary structure comprises 1609 residues: Transmembrane protein 131-like (1609 aa).

A signal peptide spans 1-40 (MAGLRRPQPGCYCRTAAAVNLLLGVFQVLLPCCRPGGAQG). Topologically, residues 41 to 869 (QAIEPLPNVV…VVPGPSWEES (829 aa)) are extracellular. N343, N439, N522, N593, N709, and N846 each carry an N-linked (GlcNAc...) asparagine glycan. Residues 696–916 (DYGKVTSLIL…QNASSSSQQN (221 aa)) are required for Wnt-signaling inhibition and LRP6 degradation. Residues 870–890 (FWRLTVFFVSLSLLGVILIAF) form a helical membrane-spanning segment. The Cytoplasmic segment spans residues 891–1609 (QQAQYILMEF…SRDSSYCGNV (719 aa)). 5 disordered regions span residues 946-974 (RGKNCLPVNTPQSRIQNAAKRSPATYGHS), 991-1014 (TAAASSTSTTTEEKQTSPLGSSLP), 1108-1144 (KTSKKLPENHLPRNSPQYHQPDLPEISRKNNGNNQQV), 1159-1178 (VDTKPSSEKKIHKTSREDMF), and 1304-1340 (SSSDCGSSSGSVRASRGSWGSWSSTSSSDGDKKPMVD). Residues 952–961 (PVNTPQSRIQ) show a composition bias toward polar residues. The span at 991 to 1000 (TAAASSTSTT) shows a compositional bias: low complexity. Residue S1122 is modified to Phosphoserine. Residues 1304-1331 (SSSDCGSSSGSVRASRGSWGSWSSTSSS) show a composition bias toward low complexity.

It belongs to the TMEM131 family. As to expression, expressed in thymocytes.

The protein localises to the cell membrane. It localises to the cytoplasm. Its subcellular location is the endoplasmic reticulum. Its function is as follows. Membrane-associated form that antagonizes canonical Wnt signaling by triggering lysosome-dependent degradation of Wnt-activated LRP6. Regulates thymocyte proliferation. This is Transmembrane protein 131-like from Homo sapiens (Human).